A 335-amino-acid chain; its full sequence is Phospho-N-acetylmuramoyl-pentapeptide-transferase (335 aa).

The next 10 membrane-spanning stretches (helical) occupy residues Leu3–Ile23, Gly53–Phe73, Ser78–Leu98, Phe118–Ile138, Val143–Val163, Gly174–Ala194, Phe200–Asn220, Ile226–Ala246, Trp251–Val271, and Val314–Tyr334.

This sequence belongs to the glycosyltransferase 4 family. MraY subfamily. Requires Mg(2+) as cofactor.

Its subcellular location is the cell membrane. It catalyses the reaction UDP-N-acetyl-alpha-D-muramoyl-L-alanyl-gamma-D-glutamyl-L-lysyl-D-alanyl-D-alanine + di-trans,octa-cis-undecaprenyl phosphate = Mur2Ac(oyl-L-Ala-gamma-D-Glu-L-Lys-D-Ala-D-Ala)-di-trans,octa-cis-undecaprenyl diphosphate + UMP. The protein operates within cell wall biogenesis; peptidoglycan biosynthesis. Its function is as follows. Catalyzes the initial step of the lipid cycle reactions in the biosynthesis of the cell wall peptidoglycan: transfers peptidoglycan precursor phospho-MurNAc-pentapeptide from UDP-MurNAc-pentapeptide onto the lipid carrier undecaprenyl phosphate, yielding undecaprenyl-pyrophosphoryl-MurNAc-pentapeptide, known as lipid I. The sequence is that of Phospho-N-acetylmuramoyl-pentapeptide-transferase from Streptococcus equi subsp. equi (strain 4047).